The primary structure comprises 417 residues: Peptidyl-Asp metalloendopeptidase (417 aa).

The N-terminal stretch at 1 to 23 is a signal peptide; it reads MKSKSMCTTVGLIAMCLAGSAAA. Residue histidine 331 participates in Zn(2+) binding. The active site involves glutamate 332. The Zn(2+) site is built by histidine 335 and histidine 341.

Belongs to the peptidase M72 family. Requires Zn(2+) as cofactor.

It carries out the reaction Cleavage of Xaa-|-Asp, Xaa-|-Glu and Xaa-|-cysteic acid bonds.. Metalloprotease, specifically cleaves on the N-terminal side of aspartyl, glutamyl and cysteic acid residues. This chain is Peptidyl-Asp metalloendopeptidase, found in Xanthomonas campestris pv. campestris (strain ATCC 33913 / DSM 3586 / NCPPB 528 / LMG 568 / P 25).